A 215-amino-acid polypeptide reads, in one-letter code: 3-isopropylmalate dehydratase small subunit (215 aa).

It belongs to the LeuD family. LeuD type 1 subfamily. Heterodimer of LeuC and LeuD.

It catalyses the reaction (2R,3S)-3-isopropylmalate = (2S)-2-isopropylmalate. It functions in the pathway amino-acid biosynthesis; L-leucine biosynthesis; L-leucine from 3-methyl-2-oxobutanoate: step 2/4. Its function is as follows. Catalyzes the isomerization between 2-isopropylmalate and 3-isopropylmalate, via the formation of 2-isopropylmaleate. In Xylella fastidiosa (strain M12), this protein is 3-isopropylmalate dehydratase small subunit.